We begin with the raw amino-acid sequence, 294 residues long: MTKAVLTSISQLALKALLYEVSLSPKPGLVDRFDNGAHDDMSFMTFIDSMIALSPFFQAYIETGFAYAKEEPLLLFNRLRQLGQKAEETMFCATQGINTHKGLNFSMALLLGTTGAYLARTPHLMTDLGRFSKEDTLAICRLVKPMTAHLIQTDLGHLNTKKEFTYGEQLFVTYGIKGPRGEASEGFTTLTDHALPYFRQMISQNDPETSQLRLLVYLMSIVEDGNLIHRGGIEAWKGVKADMRLLLQQDLSTTDLRLALSSYNQCLINQHLSPGGAADLLALTFYFAFLEKLL.

Belongs to the CitG/MdcB family.

The catalysed reaction is 3'-dephospho-CoA + ATP = 2'-(5''-triphospho-alpha-D-ribosyl)-3'-dephospho-CoA + adenine. The polypeptide is Probable 2-(5''-triphosphoribosyl)-3'-dephosphocoenzyme-A synthase (Streptococcus pyogenes serotype M2 (strain MGAS10270)).